Here is a 410-residue protein sequence, read N- to C-terminus: Ribonucleoside-diphosphate reductase small chain (410 aa).

Residues methionine 1–methionine 20 are compositionally biased toward polar residues. Disordered stretches follow at residues methionine 1–leucine 43 and asparagine 55–proline 78. 2 stretches are compositionally biased toward basic and acidic residues: residues proline 23 to leucine 43 and asparagine 55 to lysine 65. Fe cation contacts are provided by aspartate 146, glutamate 177, and histidine 180. Tyrosine 184 is an active-site residue. Fe cation contacts are provided by glutamate 240, glutamate 274, and histidine 277.

This sequence belongs to the ribonucleoside diphosphate reductase small chain family. Heterodimer of a large and a small subunit. It depends on Fe cation as a cofactor.

The enzyme catalyses a 2'-deoxyribonucleoside 5'-diphosphate + [thioredoxin]-disulfide + H2O = a ribonucleoside 5'-diphosphate + [thioredoxin]-dithiol. Provides the precursors necessary for DNA synthesis. Catalyzes the biosynthesis of deoxyribonucleotides from the corresponding ribonucleotides. This Neurospora crassa (strain ATCC 24698 / 74-OR23-1A / CBS 708.71 / DSM 1257 / FGSC 987) protein is Ribonucleoside-diphosphate reductase small chain (rnr-2).